A 573-amino-acid polypeptide reads, in one-letter code: Heat shock protein 60A (573 aa).

The transit peptide at 1–57 (MFRLPVSLARSSISRQLAMRGYAKDVRFGPEVRAMMLQGVDVLADAVAVTMGPKGRN) directs the protein to the mitochondrion.

It belongs to the chaperonin (HSP60) family.

The protein localises to the mitochondrion matrix. Functionally, prevents misfolding and promotes the refolding and proper assembly of unfolded polypeptides generated under stress conditions. The protein is Heat shock protein 60A of Drosophila melanogaster (Fruit fly).